The chain runs to 391 residues: Stearoyl-[acyl-carrier-protein] 9-desaturase 5, chloroplastic (391 aa).

The tract at residues 1 to 20 (MAFAPSHTASPSYCGVAQGG) is disordered. The transit peptide at 1 to 32 (MAFAPSHTASPSYCGVAQGGRRSNGMSPVVAM) directs the protein to the chloroplast. Residues Glu-133, Glu-171, His-174, Glu-224, Glu-257, and His-260 each coordinate Fe cation.

This sequence belongs to the fatty acid desaturase type 2 family. In terms of assembly, homodimer. Fe(2+) is required as a cofactor.

The protein resides in the plastid. The protein localises to the chloroplast. It catalyses the reaction octadecanoyl-[ACP] + 2 reduced [2Fe-2S]-[ferredoxin] + O2 + 2 H(+) = (9Z)-octadecenoyl-[ACP] + 2 oxidized [2Fe-2S]-[ferredoxin] + 2 H2O. Its pathway is lipid metabolism; fatty acid metabolism. Converts stearoyl-ACP to oleoyl-ACP by introduction of a cis double bond between carbons 9 and 10 of the acyl chain. The chain is Stearoyl-[acyl-carrier-protein] 9-desaturase 5, chloroplastic from Oryza sativa subsp. indica (Rice).